Reading from the N-terminus, the 217-residue chain is Probable transaldolase (217 aa).

Residue Lys84 is the Schiff-base intermediate with substrate of the active site.

This sequence belongs to the transaldolase family. Type 3B subfamily.

Its subcellular location is the cytoplasm. The catalysed reaction is D-sedoheptulose 7-phosphate + D-glyceraldehyde 3-phosphate = D-erythrose 4-phosphate + beta-D-fructose 6-phosphate. The protein operates within carbohydrate degradation; pentose phosphate pathway; D-glyceraldehyde 3-phosphate and beta-D-fructose 6-phosphate from D-ribose 5-phosphate and D-xylulose 5-phosphate (non-oxidative stage): step 2/3. Its function is as follows. Transaldolase is important for the balance of metabolites in the pentose-phosphate pathway. This Roseiflexus castenholzii (strain DSM 13941 / HLO8) protein is Probable transaldolase.